We begin with the raw amino-acid sequence, 581 residues long: Penicillin-binding protein activator LpoA (581 aa).

An N-terminal signal peptide occupies residues 1 to 26; that stretch reads MLSILMQGLRLKKCFLPILVMFFLAG. The N-palmitoyl cysteine moiety is linked to residue Cys27. A lipid anchor (S-diacylglycerol cysteine) is attached at Cys27.

This sequence belongs to the LpoA family. In terms of assembly, interacts with PBP1a.

It localises to the cell outer membrane. Regulator of peptidoglycan synthesis that is essential for the function of penicillin-binding protein 1A (PBP1a). This chain is Penicillin-binding protein activator LpoA, found in Histophilus somni (strain 129Pt) (Haemophilus somnus).